The primary structure comprises 255 residues: Ribonuclease HII (255 aa).

The 184-residue stretch at 72–255 (RLIAGVDEVG…KTFAPVQSFR (184 aa)) folds into the RNase H type-2 domain. Residues Asp-78, Glu-79, and Asp-170 each contribute to the a divalent metal cation site.

This sequence belongs to the RNase HII family. Mn(2+) serves as cofactor. Requires Mg(2+) as cofactor.

It localises to the cytoplasm. The catalysed reaction is Endonucleolytic cleavage to 5'-phosphomonoester.. In terms of biological role, endonuclease that specifically degrades the RNA of RNA-DNA hybrids. The sequence is that of Ribonuclease HII (rnhB) from Bacillus subtilis (strain 168).